The following is a 744-amino-acid chain: MAGRTMQAARCPTDELSLSNCAVVNEKDFQSGQHVMVRTSPNHKYIFTLRTHPSVVPGCIAFSLPQRKWAGLSIGQDIEVALYSFDKAKQCIGTMTIEIDFLQKKNIDSNPYDTDKMAAEFIQQFNNQAFSVGQQLVFSFNDKLFGLLVKDIEAMDPSILKGEPASGKRQKIEVGLVVGNSQVAFEKAENSSLNLIGKAKTKENRQSIINPDWNFEKMGIGGLDKEFSDIFRRAFASRVFPPEIVEQMGCKHVKGILLYGPPGCGKTLLARQIGKMLNAREPKVVNGPEILNKYVGESEANIRKLFADAEEEQRRLGANSGLHIIIFDEIDAICKQRGSMAGSTGVHDTVVNQLLSKIDGVEQLNNILVIGMTNRPDLIDEALLRPGRLEVKMEIGLPDEKGRLQILHIHTARMRGHQLLSADVDIKELAVETKNFSGAELEGLVRAAQSTAMNRHIKASTKVEVDMEKAESLQVTRGDFLASLENDIKPAFGTNQEDYASYIMNGIIKWGDPVTRVLDDGELLVQQTKNSDRTPLVSVLLEGPPHSGKTALAAKIAEESNFPFIKICSPDKMIGFSETAKCQAMKKIFDDAYKSQLSCVVVDDIERLLDYVPIGPRFSNLVLQALLVLLKKAPPQGRKLLIIGTTSRKDVLQEMEMLNAFSTTIHVPNIATGEQLLEALELLGNFKDKERTTIAQQVKGKKVWIGIKKLLMLIEMSLQMDPEYRVRKFLALMREEGASPLDFD.

Lys105 bears the N6-acetyllysine mark. Ser207 bears the Phosphoserine mark. The residue at position 259 (Tyr259) is a Phosphotyrosine. ATP is bound by residues 505–510 and 545–552; these read NGIIKW and PHSGKTAL. Residue Thr550 participates in Mg(2+) binding. Ser569 carries the post-translational modification Phosphoserine; by CDK16.

The protein belongs to the AAA ATPase family. Homohexamer. Interacts with GABARAP and GABARAPL2. Interacts with GRIA2. Interacts with PLK2, leading to disrupt the interaction with GRIA2. Interacts with MUSK; may regulate MUSK endocytosis and activity. Interacts with CDK16. The cofactor is Mg(2+). Phosphorylation at Ser-569 interferes with homohexamerization.

It localises to the cytoplasm. The catalysed reaction is ATP + H2O = ADP + phosphate + H(+). In terms of biological role, required for vesicle-mediated transport. Catalyzes the fusion of transport vesicles within the Golgi cisternae. Is also required for transport from the endoplasmic reticulum to the Golgi stack. Seems to function as a fusion protein required for the delivery of cargo proteins to all compartments of the Golgi stack GRIA2 leads to influence GRIA2 membrane cycling. In Mus musculus (Mouse), this protein is Vesicle-fusing ATPase (Nsf).